Consider the following 473-residue polypeptide: Zinc transporter SLC39A7 (473 aa).

Residues 11 to 31 form a helical membrane-spanning segment; the sequence is VAVGLLTWAALGLLVAGHGGH. Composition is skewed to basic and acidic residues over residues 44–56 and 66–114; these read GHSH…DFHH and HTHE…EHSH. Residues 44–120 form a disordered region; that stretch reads GHSHRHSHED…EHSHGGYGES (77 aa). His66 is modified (pros-methylhistidine). 3 helical membrane-spanning segments follow: residues 138 to 158, 169 to 189, and 214 to 234; these read ALGA…LIPV, LQIL…LHLI, and GPIL…LVVE. Residues 243 to 316 are disordered; that stretch reads GHEHSHGHGH…QHSGEEKAGS (74 aa). Phosphoserine is present on residues Ser278 and Ser279. Residues 298–316 are compositionally biased toward basic and acidic residues; it reads RPKDGPVRPQHSGEEKAGS. Residues 388–408 form a helical membrane-spanning segment; the sequence is LLTAVGALAGTAFALLTEGGA. The tract at residues 428-473 is disordered; it reads GDQAATQASPRSTSLPPVGEEDFREDPGPRQKGQQEKSGINVNCVS. Polar residues predominate over residues 431-442; the sequence is AATQASPRSTSL. Residues 452–462 show a composition bias toward basic and acidic residues; it reads EDPGPRQKGQQ. The segment covering 463-473 has biased composition (polar residues); it reads EKSGINVNCVS.

The protein belongs to the ZIP transporter (TC 2.A.5) family. KE4/Catsup subfamily. As to quaternary structure, homodimer. In terms of processing, methylation at some His residue by METTL9 leads to reduced zinc-binding. Post-translationally, rapidly phosphorylated by CK2 following Zn(2+) treatment. This phosphorylation is required for efficient cytosolic Zn(2+) release.

It localises to the endoplasmic reticulum membrane. It is found in the golgi apparatus. The protein resides in the cis-Golgi network membrane. It carries out the reaction Zn(2+)(in) = Zn(2+)(out). Transports Zn(2+) from the endoplasmic reticulum (ER)/Golgi apparatus to the cytosol, playing an essential role in the regulation of cytosolic zinc levels. Acts as a gatekeeper of zinc release from intracellular stores, requiring post-translational activation by phosphorylation on residues, resulting in activation of multiple downstream pathways leading to cell growth and proliferation. Has an essential role in B cell development and is required for proper B cell receptor signaling. Plays an important role in maintaining intestinal epithelial homeostasis and skin dermis development by regulating ER function. Controls cell signaling pathways involved in glucose metabolism in skeletal muscle. Has a protective role against ER stress in different biological contexts. Mediates Zn(2+)-induced ferroptosis. The protein is Zinc transporter SLC39A7 (SLC39A7) of Sus scrofa (Pig).